We begin with the raw amino-acid sequence, 472 residues long: Cysteine--tRNA ligase (472 aa).

C28 contributes to the Zn(2+) binding site. Positions 30–40 match the 'HIGH' region motif; that stretch reads PTVYNYIHIGN. Residues C212, H237, and E241 each contribute to the Zn(2+) site. The short motif at 271 to 275 is the 'KMSKS' region element; that stretch reads KMSKS. K274 is a binding site for ATP.

It belongs to the class-I aminoacyl-tRNA synthetase family. Monomer. Zn(2+) serves as cofactor.

It localises to the cytoplasm. It carries out the reaction tRNA(Cys) + L-cysteine + ATP = L-cysteinyl-tRNA(Cys) + AMP + diphosphate. The protein is Cysteine--tRNA ligase of Limosilactobacillus fermentum (strain NBRC 3956 / LMG 18251) (Lactobacillus fermentum).